The sequence spans 89 residues: Large ribosomal subunit protein bL27 (89 aa).

The segment at 1 to 22 (MAQKKAGGSSRNGRDSAGRRLG) is disordered.

It belongs to the bacterial ribosomal protein bL27 family.

This chain is Large ribosomal subunit protein bL27, found in Gluconacetobacter diazotrophicus (strain ATCC 49037 / DSM 5601 / CCUG 37298 / CIP 103539 / LMG 7603 / PAl5).